The sequence spans 279 residues: Energy-coupling factor transporter ATP-binding protein EcfA1 (279 aa).

The ABC transporter domain maps to 6 to 240 (VEFRNVSFRY…KDALREIGLD (235 aa)). 40–47 (GHNGSGKS) serves as a coordination point for ATP.

This sequence belongs to the ABC transporter superfamily. Energy-coupling factor EcfA family. In terms of assembly, forms a stable energy-coupling factor (ECF) transporter complex composed of 2 membrane-embedded substrate-binding proteins (S component), 2 ATP-binding proteins (A component) and 2 transmembrane proteins (T component).

The protein resides in the cell membrane. Functionally, ATP-binding (A) component of a common energy-coupling factor (ECF) ABC-transporter complex. Unlike classic ABC transporters this ECF transporter provides the energy necessary to transport a number of different substrates. In Oceanobacillus iheyensis (strain DSM 14371 / CIP 107618 / JCM 11309 / KCTC 3954 / HTE831), this protein is Energy-coupling factor transporter ATP-binding protein EcfA1.